The primary structure comprises 79 residues: Small ribosomal subunit protein bS18 (79 aa).

This sequence belongs to the bacterial ribosomal protein bS18 family. In terms of assembly, part of the 30S ribosomal subunit. Forms a tight heterodimer with protein bS6.

Functionally, binds as a heterodimer with protein bS6 to the central domain of the 16S rRNA, where it helps stabilize the platform of the 30S subunit. In Latilactobacillus sakei subsp. sakei (strain 23K) (Lactobacillus sakei subsp. sakei), this protein is Small ribosomal subunit protein bS18.